The sequence spans 57 residues: uncharacterized protein (57 aa).

This is an uncharacterized protein from Bacillus subtilis (strain 168).